We begin with the raw amino-acid sequence, 424 residues long: Histidine--tRNA ligase (424 aa).

This sequence belongs to the class-II aminoacyl-tRNA synthetase family. In terms of assembly, homodimer.

Its subcellular location is the cytoplasm. The catalysed reaction is tRNA(His) + L-histidine + ATP = L-histidyl-tRNA(His) + AMP + diphosphate + H(+). The protein is Histidine--tRNA ligase of Salmonella agona (strain SL483).